A 627-amino-acid chain; its full sequence is (R)-linalool synthase 1, chloroplastic (627 aa).

The N-terminal 21 residues, 1–21, are a transit peptide targeting the chloroplast; it reads MAFVSIAPLASRCCVHKSFVS. 3 residues coordinate Mg(2+): Asp378, Asp382, and Glu530. The DDXXD motif signature appears at 378–382; it reads DDIYD.

It belongs to the terpene synthase family. Tpsd subfamily. Requires Mg(2+) as cofactor. Mn(2+) is required as a cofactor.

Its subcellular location is the plastid. It is found in the chloroplast. The enzyme catalyses (2E)-geranyl diphosphate + H2O = (R)-linalool + diphosphate. Its pathway is terpene metabolism; oleoresin biosynthesis. In terms of biological role, terpene synthase (TPS) involved in the biosynthesis of monoterpene natural products included in conifer oleoresin secretions and volatile emissions; these compounds contribute to biotic and abiotic stress defense against herbivores and pathogens. Catalyzes the conversion of (2E)-geranyl diphosphate (GPP) to (R)-linalool. The chain is (R)-linalool synthase 1, chloroplastic from Picea sitchensis (Sitka spruce).